The sequence spans 307 residues: HPr kinase/phosphorylase (307 aa).

Catalysis depends on residues histidine 136 and lysine 157. Residue 151 to 158 (GESGIGKS) participates in ATP binding. Position 158 (serine 158) interacts with Mg(2+). Aspartate 175 serves as the catalytic Proton acceptor; for phosphorylation activity. Proton donor; for dephosphorylation activity. Residues 198-207 (LEVRGMGIID) are important for the catalytic mechanism of both phosphorylation and dephosphorylation. Glutamate 199 lines the Mg(2+) pocket. Arginine 240 is a catalytic residue. Positions 261–266 (PIRPGR) are important for the catalytic mechanism of dephosphorylation.

Belongs to the HPrK/P family. As to quaternary structure, homohexamer. It depends on Mg(2+) as a cofactor.

It catalyses the reaction [HPr protein]-L-serine + ATP = [HPr protein]-O-phospho-L-serine + ADP + H(+). The enzyme catalyses [HPr protein]-O-phospho-L-serine + phosphate + H(+) = [HPr protein]-L-serine + diphosphate. Functionally, catalyzes the ATP- as well as the pyrophosphate-dependent phosphorylation of a specific serine residue in HPr, a phosphocarrier protein of the phosphoenolpyruvate-dependent sugar phosphotransferase system (PTS). HprK/P also catalyzes the pyrophosphate-producing, inorganic phosphate-dependent dephosphorylation (phosphorolysis) of seryl-phosphorylated HPr (P-Ser-HPr). The two antagonistic activities of HprK/P are regulated by several intracellular metabolites, which change their concentration in response to the absence or presence of rapidly metabolisable carbon sources (glucose, fructose, etc.) in the growth medium. Therefore, by controlling the phosphorylation state of HPr, HPrK/P is a sensor enzyme that plays a major role in the regulation of carbon metabolism and sugar transport: it mediates carbon catabolite repression (CCR), and regulates PTS-catalyzed carbohydrate uptake and inducer exclusion. This is HPr kinase/phosphorylase from Clostridium perfringens (strain ATCC 13124 / DSM 756 / JCM 1290 / NCIMB 6125 / NCTC 8237 / Type A).